Here is a 391-residue protein sequence, read N- to C-terminus: 3-ketoacyl-CoA thiolase (391 aa).

Cys95 acts as the Acyl-thioester intermediate in catalysis. Catalysis depends on proton acceptor residues His347 and Cys377.

This sequence belongs to the thiolase-like superfamily. Thiolase family. In terms of assembly, heterotetramer of two alpha chains (FadB) and two beta chains (FadA).

The protein resides in the cytoplasm. The catalysed reaction is an acyl-CoA + acetyl-CoA = a 3-oxoacyl-CoA + CoA. It functions in the pathway lipid metabolism; fatty acid beta-oxidation. Catalyzes the final step of fatty acid oxidation in which acetyl-CoA is released and the CoA ester of a fatty acid two carbons shorter is formed. The polypeptide is 3-ketoacyl-CoA thiolase (Pseudomonas entomophila (strain L48)).